The chain runs to 427 residues: Isocitrate dehydrogenase [NADP] (427 aa).

Position 114 (Thr114) interacts with NADP(+). 5 residues coordinate D-threo-isocitrate: Ser123, Asn125, Arg129, Arg139, and Arg163. Mg(2+) is bound at residue Asp317. NADP(+)-binding positions include 349 to 355 (HGTAPKY), Asn362, Tyr401, and Arg405.

The protein belongs to the isocitrate and isopropylmalate dehydrogenases family. As to quaternary structure, homodimer. It depends on Mg(2+) as a cofactor. Mn(2+) is required as a cofactor.

It carries out the reaction D-threo-isocitrate + NADP(+) = 2-oxoglutarate + CO2 + NADPH. Functionally, catalyzes the oxidative decarboxylation of isocitrate to 2-oxoglutarate and carbon dioxide with the concomitant reduction of NADP(+). The polypeptide is Isocitrate dehydrogenase [NADP] (icd) (Coxiella burnetii (strain RSA 493 / Nine Mile phase I)).